Here is a 140-residue protein sequence, read N- to C-terminus: RxLR effector protein CRE2 (140 aa).

The first 24 residues, 1 to 24 (MRWLIWTAVSTLVMLLAMTEVSAS), serve as a signal peptide directing secretion. The short motif at 56–72 (RSLRDKSSSLITESEER) is the RxLR-dEER element.

This sequence belongs to the RxLR effector family.

It localises to the secreted. The protein localises to the host cell. Its function is as follows. Effector that is involved in host plant infection. Contributes to virulence during the early infection stage, by inhibiting plant defense responses induced by both PAMP-triggered immunity (PTI) and effector-triggered immunity (ETI). The polypeptide is RxLR effector protein CRE2 (Phytophthora infestans (strain T30-4) (Potato late blight agent)).